The chain runs to 435 residues: Tol-Pal system protein TolB (435 aa).

Residues 1-28 (MVKCSLIRALMVIAGLIGAAAFTTPANA) form the signal peptide. The tract at residues 288–310 (STAAIDTSPSYSPDGARVSFESD) is disordered.

Belongs to the TolB family. In terms of assembly, the Tol-Pal system is composed of five core proteins: the inner membrane proteins TolA, TolQ and TolR, the periplasmic protein TolB and the outer membrane protein Pal. They form a network linking the inner and outer membranes and the peptidoglycan layer.

The protein resides in the periplasm. Part of the Tol-Pal system, which plays a role in outer membrane invagination during cell division and is important for maintaining outer membrane integrity. The sequence is that of Tol-Pal system protein TolB from Rhizobium leguminosarum bv. trifolii (strain WSM2304).